Reading from the N-terminus, the 273-residue chain is Homeobox protein Hox-C13b (273 aa).

A DNA-binding region (homeobox) is located at residues 201-260 (GRKKRVPYTKIQLKELEKEYAASKFITKDRRRRISATTSLSERQVTIWFQNRRVKEKKFV).

Belongs to the Abd-B homeobox family.

It localises to the nucleus. Functionally, sequence-specific transcription factor which is part of a developmental regulatory system that provides cells with specific positional identities on the anterior-posterior axis. Plays a role in early embryonic development. The polypeptide is Homeobox protein Hox-C13b (hoxc13b) (Danio rerio (Zebrafish)).